Here is a 1262-residue protein sequence, read N- to C-terminus: Unconventional myosin-VI (1262 aa).

Residues 2 to 53 (EDGKPVWAPHPTDGFQMGNIVDIGPDSLTIEPLNQKGKTFLALINQVFPAEE) form the Myosin N-terminal SH3-like domain. The Myosin motor domain maps to 57–771 (KDVEDNCSLM…KFAEFDQIMK (715 aa)). ATP is bound at residue 151–158 (GESGAGKT). Phosphoserine is present on Ser267. A responsible for slow ATPase activity region spans residues 273–317 (YLNRGCTRFFANKETDKQILQNRKSPEYVKAGSLKDPLLDDHGDF). Thr405 is modified (phosphothreonine). Ser604 carries the phosphoserine modification. 2 actin-binding regions span residues 651–673 (LNLLLDKLRSTGASFIRCIKPNL) and 665–672 (FIRCIKPN). The tract at residues 782-810 (KRVNLWLVCSRWKKVQWCSLSVIKLKNKI) is required for binding calmodulin. In terms of domain architecture, IQ spans 814-834 (AEACIKMQKTIRMWLCKRRHK). Residues 835–916 (PRIDGLVKVG…EDLLSALQKK (82 aa)) form a three-helix bundle region. A coiled-coil region spans residues 864–984 (KPEVNRQIKN…EDDEKRIQAE (121 aa)). Positions 917–984 (KQQEEEAERL…EDDEKRIQAE (68 aa)) are SAH. The tract at residues 933 to 955 (MEKERKRREEDEERRRKEEEERR) is disordered. Ser1025 bears the Phosphoserine mark. Residues 1034–1253 (LRRGPAVQAT…ESRQARPTYA (220 aa)) form an interaction with TAX1BP1 and CALCOCO2/NDP52 region. Positions 1084–1086 (RRL) are interaction with OPTN. The residue at position 1123 (Ser1123) is a Phosphoserine. Positions 1125–1253 (QQNPAAQLPA…ESRQARPTYA (129 aa)) are interaction with TOM1.

It belongs to the TRAFAC class myosin-kinesin ATPase superfamily. Myosin family. In terms of assembly, homodimer; dimerization seems to implicate the unfolding of the three-helix bundle region creating an additional calmodulin binding site, and cargo binding. Able to function as a monomer under specific conditions in vitro. Forms a complex with CFTR and DAB2 in the apical membrane of epithelial cells. Component of the DISP/DOCK7-induced septin displacement complex, at least composed of DOCK7, LRCH3 and MYO6. Binding to calmodulin through a unique insert, not found in other myosins, located in the neck region between the motor domain and the IQ domain appears to contribute to the directionality reversal. This interaction occurs only if the C-terminal lobe of calmodulin is occupied by calcium. Interaction with F-actin/ACTN1 occurs only at the apical brush border domain of the proximal tubule cells. Interacts with DAB2. In vitro, the C-terminal globular tail binds a C-terminal region of DAB2. Interacts with CFTR. Interacts with CABP5. Interacts (via residues 1128-1256) with TOM1 (via residues 392-463). Interacts (via residues 1060-1285) with OPTN. Interacts (via residues 1060-1285) with TAX1BP1 and CALCOCO2/NDP52. Interacts with TOM1L2. Interacts with CLIC5; may work together in a complex which also includes RDX and MYO6 to stabilize linkages between the plasma membrane and subjacent actin cytoskeleton at the base of stereocilia. Post-translationally, phosphorylation in the motor domain, induced by EGF, results in translocation of MYO6 from the cell surface to membrane ruffles and affects F-actin dynamics. Phosphorylated in vitro by p21-activated kinase (PAK). In terms of tissue distribution, within the cochlea, expressed specifically within the sensory hair cells (at protein level). Expressed in the inner and outer plexiform layer of the retina (at protein level). Widely expressed. Expressed in the brain, kidney, liver, and testis.

It is found in the golgi apparatus. The protein resides in the trans-Golgi network membrane. The protein localises to the nucleus. It localises to the cytoplasm. Its subcellular location is the perinuclear region. It is found in the membrane. The protein resides in the clathrin-coated pit. The protein localises to the cytoplasmic vesicle. It localises to the clathrin-coated vesicle. Its subcellular location is the cell projection. It is found in the filopodium. The protein resides in the ruffle membrane. The protein localises to the microvillus. It localises to the cytosol. In terms of biological role, myosins are actin-based motor molecules with ATPase activity. Unconventional myosins serve in intracellular movements. Myosin 6 is a reverse-direction motor protein that moves towards the minus-end of actin filaments. Has slow rate of actin-activated ADP release due to weak ATP binding. Functions in a variety of intracellular processes such as vesicular membrane trafficking and cell migration. Required for the structural integrity of the Golgi apparatus via the p53-dependent pro-survival pathway. Appears to be involved in a very early step of clathrin-mediated endocytosis in polarized epithelial cells. Together with TOM1, mediates delivery of endocytic cargo to autophagosomes thereby promoting autophagosome maturation and driving fusion with lysosomes. Links TOM1 with autophagy receptors, such as TAX1BP1; CALCOCO2/NDP52 and OPTN. May act as a regulator of F-actin dynamics. As part of the DISP complex, may regulate the association of septins with actin and thereby regulate the actin cytoskeleton. May play a role in transporting DAB2 from the plasma membrane to specific cellular targets. May play a role in the extension and network organization of neurites. Required for structural integrity of inner ear hair cells. Required for the correct localization of CLIC5 and RDX at the stereocilium base. Modulates RNA polymerase II-dependent transcription. This chain is Unconventional myosin-VI (Myo6), found in Mus musculus (Mouse).